Reading from the N-terminus, the 74-residue chain is Homeobox protein Hox-B8 (74 aa).

The span at 1–24 (YTDCKLAASGLGEEAESSEQSPSP) shows a compositional bias: low complexity. Positions 1–28 (YTDCKLAASGLGEEAESSEQSPSPTQLF) are disordered. Positions 27–32 (LFPWMR) match the Antp-type hexapeptide motif. Positions 39–74 (RRRGRQTYSRYQTLELEKEFLFNPYLTRKRRIEVSR) form a DNA-binding region, homeobox.

Belongs to the Antp homeobox family.

It localises to the nucleus. Its function is as follows. Sequence-specific transcription factor which is part of a developmental regulatory system that provides cells with specific positional identities on the anterior-posterior axis. The chain is Homeobox protein Hox-B8 (HOXB8) from Gallus gallus (Chicken).